The primary structure comprises 204 residues: Partner of Y14 and mago (204 aa).

2 disordered regions span residues 1–121 (MGSR…QSVN) and 133–153 (SSNNDVCGGAPNPGTTGEDVE). Basic and acidic residues predominate over residues 7–36 (EQGKRMAELSKNLKEGERILEPTRRPDGTL). Positions 104–121 (KANSSEDGSASNGSQSVN) are enriched in polar residues. Residues 195–200 (ELKALE) carry the Nuclear export signal motif.

Belongs to the pym family. Interacts with MAGO and Y14. As to expression, expressed in root and shoot meristems, cotyledons, vascular tissues of leaves, receptacle of flowers and siliques, and pollen grains.

The protein resides in the cytoplasm. It is found in the nucleus. The protein localises to the nucleolus. It localises to the nucleoplasm. Key regulator of the exon junction complex (EJC), a multiprotein complex that associates immediately upstream of the exon-exon junction on mRNAs and serves as a positional landmark for the intron exon structure of genes and directs post-transcriptional processes in the cytoplasm such as mRNA export, nonsense-mediated mRNA decay (NMD) or translation. Acts as an EJC disassembly factor, allowing translation-dependent EJC removal and recycling by disrupting mature EJC from spliced mRNAs. Can increase in vitro the expression from reporter constructs that contain leader introns required for the expression of different genes. In association with MAGO and PYM, participates in intron-mediated enhancement of gene expression. In Arabidopsis thaliana (Mouse-ear cress), this protein is Partner of Y14 and mago.